The primary structure comprises 139 residues: Aspartate 1-decarboxylase (139 aa).

Ser-25 acts as the Schiff-base intermediate with substrate; via pyruvic acid in catalysis. Ser-25 carries the pyruvic acid (Ser) modification. Thr-57 contributes to the substrate binding site. Catalysis depends on Tyr-58, which acts as the Proton donor. Gly-73–Ala-75 lines the substrate pocket.

Belongs to the PanD family. In terms of assembly, heterooctamer of four alpha and four beta subunits. Pyruvate is required as a cofactor. In terms of processing, is synthesized initially as an inactive proenzyme, which is activated by self-cleavage at a specific serine bond to produce a beta-subunit with a hydroxyl group at its C-terminus and an alpha-subunit with a pyruvoyl group at its N-terminus.

Its subcellular location is the cytoplasm. It carries out the reaction L-aspartate + H(+) = beta-alanine + CO2. Its pathway is cofactor biosynthesis; (R)-pantothenate biosynthesis; beta-alanine from L-aspartate: step 1/1. Functionally, catalyzes the pyruvoyl-dependent decarboxylation of aspartate to produce beta-alanine. In Mycobacterium bovis (strain BCG / Tokyo 172 / ATCC 35737 / TMC 1019), this protein is Aspartate 1-decarboxylase.